The following is a 547-amino-acid chain: Probable ATP-dependent RNA helicase DDX56 (547 aa).

The Q motif signature appears at 7-35 (LGFEHMGLDPRLLQAVTDLGWSRPTLIQE). Residues 38–218 (IPLALEGKDL…ELILHNPVTL (181 aa)) enclose the Helicase ATP-binding domain. 51-58 (ARTGSGKT) is an ATP binding site. Position 126 is a phosphoserine (Ser126). Thr141 is modified (phosphothreonine). Residues 166-169 (DEAD) carry the DEAD box motif. Residues 230–424 (QLQQFQVVCE…PYQFRMEEIE (195 aa)) form the Helicase C-terminal domain. Basic residues-rich tracts occupy residues 506–525 (RPHK…KRAK) and 532–547 (SFKH…AKPS). Residues 506–547 (RPHKKRKKLSSSCRKAKRAKSQNPLRSFKHKGKKFRPTAKPS) form a disordered region. Residue Ser532 is modified to Phosphoserine.

Belongs to the DEAD box helicase family. DDX56/DBP9 subfamily. As to quaternary structure, may form homooligomeric complexes. Interacts with IRF3. Interacts with OCT4 and POU5F1. (Microbial infection) Interacts with West Nile virus capsid protein C. In terms of assembly, (Microbial infection) Interacts with foot-and-mouth disease virus protein 3A; this interaction leads to inhibition of type I interferon production. As to quaternary structure, (Microbial infection) Interacts with EMCV protein 3C; this interaction leads to inhibition of type I interferon production. Detected in heart, brain, liver, pancreas, placenta and lung.

It is found in the nucleus. Its subcellular location is the nucleolus. The enzyme catalyses ATP + H2O = ADP + phosphate + H(+). Nucleolar RNA helicase that plays a role in various biological processes including innate immunity, ribosome biogenesis or nucleolus organization. Plays an essential role in maintaining nucleolar integrity in planarian stem cells. Maintains embryonic stem cells proliferation by conventional regulation of ribosome assembly and interaction with OCT4 and POU5F1 complex. Regulates antiviral innate immunity by inhibiting the virus-triggered signaling nuclear translocation of IRF3. Mechanistically, acts by disrupting the interaction between IRF3 and importin IPO5. May play a role in later stages of the processing of the pre-ribosomal particles leading to mature 60S ribosomal subunits. Has intrinsic ATPase activity. Its function is as follows. (Microbial infection) Helicase activity is important for packaging viral RNA into virions during West Nile virus infection. Functionally, (Microbial infection) Plays a positive role in foot-and-mouth disease virus replication by inhibiting the phosphorylation of IRF3 leading to inhibition of type I interferon. In terms of biological role, (Microbial infection) Plays a positive role in EMCV replication by interrupting IRF3 phosphorylation and its nucleus translocation. The sequence is that of Probable ATP-dependent RNA helicase DDX56 (DDX56) from Homo sapiens (Human).